We begin with the raw amino-acid sequence, 708 residues long: Leukotoxin translocation ATP-binding protein LktB (708 aa).

Residues Met1–Val126 form the Peptidase C39 domain. The ABC transmembrane type-1 domain occupies Phe155 to Gln437. 5 helical membrane passes run Leu159–Val179, Leu192–Leu212, Ala270–Tyr290, Leu296–Leu316, and Val389–Gly409. The region spanning Ile469–Gln704 is the ABC transporter domain. Gly503 to Ser510 is a binding site for ATP.

This sequence belongs to the ABC transporter superfamily. Protein-1 exporter (TC 3.A.1.109) family. As to quaternary structure, homodimer.

The protein resides in the cell inner membrane. The enzyme catalyses ATP + H2O + proteinSide 1 = ADP + phosphate + proteinSide 2.. In terms of biological role, part of the ABC transporter complex LktBD involved in leukotoxin export. Transmembrane domains (TMD) form a pore in the inner membrane and the ATP-binding domain (NBD) is responsible for energy generation. This chain is Leukotoxin translocation ATP-binding protein LktB (lktB), found in Mannheimia haemolytica (Pasteurella haemolytica).